Reading from the N-terminus, the 659-residue chain is DNA ligase (659 aa).

Residues 32 to 36 (DQQYD), 81 to 82 (SL), and glutamate 110 each bind NAD(+). The active-site N6-AMP-lysine intermediate is lysine 112. NAD(+) is bound by residues arginine 133, glutamate 167, lysine 282, and lysine 306. Zn(2+)-binding residues include cysteine 399, cysteine 402, cysteine 415, and cysteine 420. Positions 582-659 (IKNNIFKNKK…QEHEFEELIK (78 aa)) constitute a BRCT domain.

Belongs to the NAD-dependent DNA ligase family. LigA subfamily. Requires Mg(2+) as cofactor. The cofactor is Mn(2+).

It catalyses the reaction NAD(+) + (deoxyribonucleotide)n-3'-hydroxyl + 5'-phospho-(deoxyribonucleotide)m = (deoxyribonucleotide)n+m + AMP + beta-nicotinamide D-nucleotide.. Functionally, DNA ligase that catalyzes the formation of phosphodiester linkages between 5'-phosphoryl and 3'-hydroxyl groups in double-stranded DNA using NAD as a coenzyme and as the energy source for the reaction. It is essential for DNA replication and repair of damaged DNA. This chain is DNA ligase, found in Phytoplasma mali (strain AT).